Consider the following 757-residue polypeptide: Protein transport protein SEC23-2 (757 aa).

Positions 56, 61, 80, and 83 each coordinate Zn(2+).

Belongs to the SEC23/SEC24 family. SEC23 subfamily. As to quaternary structure, the COPII coat is composed of at least 5 proteins: the SEC23/24 complex, the SEC13/31 complex, and the protein SAR1.

The protein resides in the cytoplasm. It is found in the cytoplasmic vesicle. The protein localises to the COPII-coated vesicle membrane. Its subcellular location is the endoplasmic reticulum membrane. It localises to the golgi apparatus membrane. In terms of biological role, component of the coat protein complex II (COPII) which promotes the formation of transport vesicles from the endoplasmic reticulum (ER). The coat has two main functions, the physical deformation of the endoplasmic reticulum membrane into vesicles and the selection of cargo molecules. The polypeptide is Protein transport protein SEC23-2 (SEC232) (Candida glabrata (strain ATCC 2001 / BCRC 20586 / JCM 3761 / NBRC 0622 / NRRL Y-65 / CBS 138) (Yeast)).